Reading from the N-terminus, the 217-residue chain is 7-cyano-7-deazaguanine synthase (217 aa).

Residue 10-20 (FSGGQDSTTCL) coordinates ATP. Residues Cys-185, Cys-194, Cys-197, and Cys-200 each contribute to the Zn(2+) site.

This sequence belongs to the QueC family. In terms of assembly, homodimer. The cofactor is Zn(2+).

It catalyses the reaction 7-carboxy-7-deazaguanine + NH4(+) + ATP = 7-cyano-7-deazaguanine + ADP + phosphate + H2O + H(+). Its pathway is purine metabolism; 7-cyano-7-deazaguanine biosynthesis. In terms of biological role, catalyzes the ATP-dependent conversion of 7-carboxy-7-deazaguanine (CDG) to 7-cyano-7-deazaguanine (preQ(0)). This chain is 7-cyano-7-deazaguanine synthase, found in Streptococcus mutans serotype c (strain ATCC 700610 / UA159).